Here is a 371-residue protein sequence, read N- to C-terminus: Probable dual-specificity RNA methyltransferase RlmN (371 aa).

The active-site Proton acceptor is glutamate 113. One can recognise a Radical SAM core domain in the interval 119-352; that stretch reads QSWGNSVCVT…TTVRREMGGE (234 aa). Cysteine 126 and cysteine 357 form a disulfide bridge. [4Fe-4S] cluster contacts are provided by cysteine 133, cysteine 137, and cysteine 140. Residues 182-183, serine 214, 237-239, and asparagine 313 contribute to the S-adenosyl-L-methionine site; these read GE and SLH. Cysteine 357 functions as the S-methylcysteine intermediate in the catalytic mechanism.

It belongs to the radical SAM superfamily. RlmN family. [4Fe-4S] cluster is required as a cofactor.

Its subcellular location is the cytoplasm. It catalyses the reaction adenosine(2503) in 23S rRNA + 2 reduced [2Fe-2S]-[ferredoxin] + 2 S-adenosyl-L-methionine = 2-methyladenosine(2503) in 23S rRNA + 5'-deoxyadenosine + L-methionine + 2 oxidized [2Fe-2S]-[ferredoxin] + S-adenosyl-L-homocysteine. The catalysed reaction is adenosine(37) in tRNA + 2 reduced [2Fe-2S]-[ferredoxin] + 2 S-adenosyl-L-methionine = 2-methyladenosine(37) in tRNA + 5'-deoxyadenosine + L-methionine + 2 oxidized [2Fe-2S]-[ferredoxin] + S-adenosyl-L-homocysteine. Its function is as follows. Specifically methylates position 2 of adenine 2503 in 23S rRNA and position 2 of adenine 37 in tRNAs. The polypeptide is Probable dual-specificity RNA methyltransferase RlmN (Symbiobacterium thermophilum (strain DSM 24528 / JCM 14929 / IAM 14863 / T)).